Here is a 526-residue protein sequence, read N- to C-terminus: Putative D-lactate dehydrogenase C713.03, mitochondrial (526 aa).

The FAD-binding PCMH-type domain maps to 93–272 (YRGKTQLALK…TKLSVICPKR (180 aa)).

The protein belongs to the FAD-binding oxidoreductase/transferase type 4 family. FAD is required as a cofactor.

It localises to the mitochondrion matrix. It carries out the reaction (R)-lactate + 2 Fe(III)-[cytochrome c] = 2 Fe(II)-[cytochrome c] + pyruvate + 2 H(+). The sequence is that of Putative D-lactate dehydrogenase C713.03, mitochondrial from Schizosaccharomyces pombe (strain 972 / ATCC 24843) (Fission yeast).